The sequence spans 122 residues: Large ribosomal subunit protein uL14 (122 aa).

The protein belongs to the universal ribosomal protein uL14 family. As to quaternary structure, part of the 50S ribosomal subunit. Forms a cluster with proteins L3 and L19. In the 70S ribosome, L14 and L19 interact and together make contacts with the 16S rRNA in bridges B5 and B8.

Its function is as follows. Binds to 23S rRNA. Forms part of two intersubunit bridges in the 70S ribosome. This is Large ribosomal subunit protein uL14 from Mycobacterium marinum (strain ATCC BAA-535 / M).